The sequence spans 318 residues: Ribosome biogenesis protein RLP7 (318 aa).

2 disordered regions span residues 1-49 (MSQP…NRFV) and 101-121 (AGSK…DEED). Positions 19 to 40 (ADRTRLEKQELAKKRKEQEEKQ) are enriched in basic and acidic residues. Residues 110-121 (ELQDVDEEDEED) show a composition bias toward acidic residues.

It belongs to the universal ribosomal protein uL30 family.

It localises to the nucleus. The protein localises to the nucleolus. Involved in the biogenesis of the 60S ribosomal subunit. May act as a specificity factor that binds precursor rRNAs and tethers the enzymes that carry out the early 5' to 3' exonucleolytic reactions that generate the mature rRNAs. The protein is Ribosome biogenesis protein RLP7 (RLP7) of Kluyveromyces lactis (strain ATCC 8585 / CBS 2359 / DSM 70799 / NBRC 1267 / NRRL Y-1140 / WM37) (Yeast).